Here is a 610-residue protein sequence, read N- to C-terminus: Protein Spindly-B (610 aa).

Residues 1–392 (MEESETVLKL…IDKVKDELSL (392 aa)) are a coiled coil. The tract at residues 474-610 (TEAHGVSDAT…KPATAQCPQQ (137 aa)) is disordered. Composition is skewed to basic and acidic residues over residues 493 to 511 (SDDKKLPKEDLSLSTKDQD) and 535 to 548 (RIMEDEKDTPDLNK). The segment covering 549–561 (RNPNNCTITSIHP) has biased composition (polar residues). Basic and acidic residues predominate over residues 570–583 (SELKKVDEEQEKRK).

This sequence belongs to the Spindly family.

The protein localises to the chromosome. Its subcellular location is the centromere. The protein resides in the kinetochore. In terms of biological role, required for the localization of dynein and dynactin to the mitotic kintochore. Dynein is believed to control the initial lateral interaction between the kinetochore and spindle microtubules and to facilitate the subsequent formation of end-on kinetochore-microtubule attachments mediated by the NDC80 complex. This is Protein Spindly-B (spdl1-b) from Xenopus laevis (African clawed frog).